Here is a 192-residue protein sequence, read N- to C-terminus: Group XIIA secretory phospholipase A2 (192 aa).

The signal sequence occupies residues 1-25; the sequence is MVTPRPAPARSPALLLLLLLATARG. Ca(2+)-binding residues include Gly91, Pro93, and Phe95. His113 is a catalytic residue. Asp114 is a Ca(2+) binding site. Asp128 is a catalytic residue.

It belongs to the phospholipase A2 family. Ca(2+) is required as a cofactor.

It is found in the secreted. Its subcellular location is the cytoplasm. The enzyme catalyses a 1,2-diacyl-sn-glycero-3-phosphocholine + H2O = a 1-acyl-sn-glycero-3-phosphocholine + a fatty acid + H(+). Its function is as follows. PA2 catalyzes the calcium-dependent hydrolysis of the 2-acyl groups in 3-sn-phosphoglycerides. Does not exhibit detectable activity toward sn-2-arachidonoyl- or linoleoyl-phosphatidylcholine or -phosphatidylethanolamine. The chain is Group XIIA secretory phospholipase A2 (Pla2g12a) from Mus musculus (Mouse).